A 440-amino-acid polypeptide reads, in one-letter code: Mitochondrial translation factor 2 (440 aa).

A mitochondrion-targeting transit peptide spans 1–15; that stretch reads MIRTSSILKNCNYRY.

It is found in the mitochondrion matrix. Functionally, required for the processing and/or for the stability of the CYTB and COX1 intron-containing pre-mRNAs and of the ATP6 transcript. Could be a stem-loop RNA-binding protein that plays a role in determining RNA stability. In Saccharomyces cerevisiae (strain ATCC 204508 / S288c) (Baker's yeast), this protein is Mitochondrial translation factor 2 (MTF2).